Reading from the N-terminus, the 923-residue chain is Protocadherin gamma-B5 (923 aa).

A signal peptide spans 1–30 (MGSGAGELGRAERLPVLFLFLLSLFCPALC). Cadherin domains lie at 31–133 (EQIR…TPKF), 134–242 (TQNS…PPVF), 243–343 (NRDV…SPEV), 344–448 (TFHS…APVF), 449–558 (HQAS…APRV), and 566–671 (DGSA…LPDI). The Extracellular segment spans residues 31–687 (EQIRYRIPEE…SDPQAELQFY (657 aa)). 2 N-linked (GlcNAc...) asparagine glycosylation sites follow: N415 and N541. A helical transmembrane segment spans residues 688 to 708 (LVVALALISVLFLLAVILAVA). The Cytoplasmic segment spans residues 709-923 (LRLRRSSSPA…KKKSGKKEKK (215 aa)). 2 disordered regions span residues 794-832 (TSHP…WPNN) and 893-923 (ATLT…KEKK). The span at 807–832 (WRFSQAQRPGTSGSQNGDDTGTWPNN) shows a compositional bias: polar residues. Basic residues predominate over residues 913-923 (NKKKSGKKEKK).

It is found in the cell membrane. Its function is as follows. Potential calcium-dependent cell-adhesion protein. May be involved in the establishment and maintenance of specific neuronal connections in the brain. The sequence is that of Protocadherin gamma-B5 (PCDHGB5) from Homo sapiens (Human).